Consider the following 323-residue polypeptide: Lipid A biosynthesis myristoyltransferase (323 aa).

Residues 23–43 traverse the membrane as a helical segment; that stretch reads YWGAWLGVAAMAGIALTPPKF. Residues 139–144 carry the HXXXXD motif motif; that stretch reads HGWAVD.

It belongs to the LpxL/LpxM/LpxP family. LpxM subfamily.

It localises to the cell inner membrane. It catalyses the reaction alpha-Kdo-(2-&gt;4)-alpha-Kdo-(2-&gt;6)-(dodecanoyl)-lipid IVA (E. coli) + tetradecanoyl-[ACP] = alpha-Kdo-(2-&gt;4)-alpha-Kdo-(2-&gt;6)-lipid A (E. coli) + holo-[ACP]. The catalysed reaction is (9Z)-hexadecenoyl-(Kdo)2-lipid IVA (E. coli) + tetradecanoyl-[ACP] = ((9Z)-hexadecenoyl-tetradecanoyl)-(Kdo)2-lipid A + holo-[ACP]. The protein operates within glycolipid biosynthesis; KDO(2)-lipid A biosynthesis; KDO(2)-lipid A from CMP-3-deoxy-D-manno-octulosonate and lipid IV(A): step 4/4. It functions in the pathway bacterial outer membrane biogenesis; lipopolysaccharide biosynthesis. Its function is as follows. Catalyzes the transfer of myristate from myristoyl-[acyl-carrier-protein] (ACP) to Kdo(2)-(lauroyl)-lipid IV(A) to form Kdo(2)-lipid A. Can probably also catalyze the transfer of myristate to Kdo(2)-(palmitoleoyl)-lipid IV(A) to form the cold-adapted Kdo(2)-lipid A. In vitro, can acylate Kdo(2)-lipid IV(A), but acylation of (KDO)2-(lauroyl)-lipid IV(A) is about 100 times faster. In vitro, can use lauroyl-ACP but displays a slight kinetic preference for myristoyl-ACP. The chain is Lipid A biosynthesis myristoyltransferase from Escherichia coli (strain K12).